Consider the following 498-residue polypeptide: ATP synthase subunit beta, chloroplastic (498 aa).

172–179 contacts ATP; it reads GGAGVGKT.

This sequence belongs to the ATPase alpha/beta chains family. In terms of assembly, F-type ATPases have 2 components, CF(1) - the catalytic core - and CF(0) - the membrane proton channel. CF(1) has five subunits: alpha(3), beta(3), gamma(1), delta(1), epsilon(1). CF(0) has four main subunits: a(1), b(1), b'(1) and c(9-12).

The protein resides in the plastid. Its subcellular location is the chloroplast thylakoid membrane. The catalysed reaction is ATP + H2O + 4 H(+)(in) = ADP + phosphate + 5 H(+)(out). Functionally, produces ATP from ADP in the presence of a proton gradient across the membrane. The catalytic sites are hosted primarily by the beta subunits. The polypeptide is ATP synthase subunit beta, chloroplastic (Cinnamomum camphora (Camphor tree)).